The sequence spans 681 residues: CAI-1 autoinducer sensor kinase/phosphatase CqsS (681 aa).

The next 4 helical transmembrane spans lie at 17 to 37 (LVGWMGFIGFPIYYIVWEFMF), 73 to 93 (AYYQVVTTLCLPCFFFYMLLM), 112 to 132 (ILLVHITSVMFVQTFVGIGLA), and 148 to 168 (MDWTHVPIFLFIYLFGNLFYF). Residues 187-413 (GIAHEMRNPL…QFTMTFPTIG (227 aa)) form the Histidine kinase domain. His190 carries the post-translational modification Phosphohistidine; by autocatalysis. Residues 564 to 681 (TIMVVDDNES…RLFDKIANWI (118 aa)) enclose the Response regulatory domain. At Asp613 the chain carries 4-aspartylphosphate.

It is found in the cell membrane. It catalyses the reaction ATP + protein L-histidine = ADP + protein N-phospho-L-histidine.. Senses the quorum-sensing autoinducer CAI-1 ((S)-3-hydroxytridecan-4-one) which probably functions as an intragenus signal. The sensory signal is then relayed to LuxU and LuxO. The sequence is that of CAI-1 autoinducer sensor kinase/phosphatase CqsS (cqsS) from Vibrio campbellii (strain ATCC BAA-1116).